The chain runs to 279 residues: MLTDGSYFHLHLVSDSTGETLITVSRAVTAQYANVTPVEHVYPLVRSQKQLDRVLQEIEEAPGIVLFTLLETELVNRLEAKCQEINSPSLSIIGPVMQLFEAYLGASTMGRVGAQHTLNAEYFQRIDALNYSMMHDDGQHVEGLEEADVVLVGVSRTSKTPTSIYLANRGIRTANVPLVAGIPIPHQLETLKKPLVVSLHASPERLIQVRQNRLLSLGAGSGNDSYIDRQAVTDEVLLARKLSAKYGWSLLDVTRRSIEETAAAIMKLLADRQRQRVPE.

153 to 160 (GVSRTSKT) contributes to the ADP binding site.

The protein belongs to the pyruvate, phosphate/water dikinase regulatory protein family. PDRP subfamily.

It catalyses the reaction N(tele)-phospho-L-histidyl/L-threonyl-[pyruvate, phosphate dikinase] + ADP = N(tele)-phospho-L-histidyl/O-phospho-L-threonyl-[pyruvate, phosphate dikinase] + AMP + H(+). The enzyme catalyses N(tele)-phospho-L-histidyl/O-phospho-L-threonyl-[pyruvate, phosphate dikinase] + phosphate + H(+) = N(tele)-phospho-L-histidyl/L-threonyl-[pyruvate, phosphate dikinase] + diphosphate. Bifunctional serine/threonine kinase and phosphorylase involved in the regulation of the pyruvate, phosphate dikinase (PPDK) by catalyzing its phosphorylation/dephosphorylation. The sequence is that of Putative pyruvate, phosphate dikinase regulatory protein from Rhodopseudomonas palustris (strain ATCC BAA-98 / CGA009).